The chain runs to 822 residues: von Willebrand factor A domain-containing protein 5A (822 aa).

Residues 1–131 form the VIT domain; sequence MEHHWGLITG…KVAVTLRYVQ (131 aa). The VWFA domain maps to 281–469; that stretch reads EFVFLMDRSG…LALQCALDDI (189 aa). Positions 657-682 are disordered; that stretch reads SMPSPAPIENQGVADSSNEKSNSQNE. Polar residues predominate over residues 669–680; that stretch reads VADSSNEKSNSQ.

Functionally, may play a role in tumorigenesis as a tumor suppressor. Altered expression of this protein and disruption of the molecular pathway it is involved in may contribute directly to or modify tumorigenesis. In Rattus norvegicus (Rat), this protein is von Willebrand factor A domain-containing protein 5A (Vwa5a).